A 2677-amino-acid chain; its full sequence is Probable helicase senataxin (2677 aa).

Lys-339 participates in a covalent cross-link: Glycyl lysine isopeptide (Lys-Gly) (interchain with G-Cter in SUMO1). Phosphoserine is present on residues Ser-615, Ser-642, and Ser-878. Residue Lys-894 forms a Glycyl lysine isopeptide (Lys-Gly) (interchain with G-Cter in SUMO2) linkage. A phosphoserine mark is found at Ser-911, Ser-947, Ser-956, Ser-1017, and Ser-1019. Glycyl lysine isopeptide (Lys-Gly) (interchain with G-Cter in SUMO2) cross-links involve residues Lys-1056 and Lys-1063. 2 disordered regions span residues 1158-1219 and 1237-1258; these read KKPK…TTVS and PVSK…RSSN. The span at 1176–1187 shows a compositional bias: polar residues; sequence PSSSVRNEGQSD. Over residues 1188-1205 the composition is skewed to basic and acidic residues; the sequence is TNKRDLVGNDFKSIDRRT. Residues 1206-1219 are compositionally biased toward polar residues; it reads STPNSRIQRATTVS. Position 1330 is a phosphoserine (Ser-1330). Glycyl lysine isopeptide (Lys-Gly) (interchain with G-Cter in SUMO2) cross-links involve residues Lys-1340 and Lys-1341. The tract at residues 1351 to 1385 is disordered; sequence QRQIRPKSQKNRRRLSDCESTDVKRAGSHTAQNSD. Basic residues predominate over residues 1354-1363; it reads IRPKSQKNRR. Residues 1364–1375 show a composition bias toward basic and acidic residues; sequence RLSDCESTDVKR. A Phosphoserine modification is found at Ser-1366. Lys-1415 participates in a covalent cross-link: Glycyl lysine isopeptide (Lys-Gly) (interchain with G-Cter in SUMO2). Ser-1489 carries the post-translational modification Phosphoserine. The disordered stretch occupies residues 1579–1604; it reads FRKPGLPPPASKPLRPTTKIFSSKST. Residues Ser-1621, Ser-1623, and Ser-1663 each carry the phosphoserine modification. 1963–1970 is a binding site for ATP; sequence GPPGTGKS. A Bipartite nuclear localization signal motif is present at residues 2070–2087; sequence KKELPSHVQAMHKRKEFL. Positions 2105–2136 form a coiled coil; it reads REIQRQELDENISKVSKERQELASKIKEVQGR. Thr-2474 carries the post-translational modification Phosphothreonine. Disordered regions lie at residues 2474–2496, 2556–2577, and 2597–2677; these read THPP…SKLD, WDPQ…EPGF, and LSSH…RKLL. Over residues 2560–2573 the composition is skewed to pro residues; it reads PSSPQHPGATPPTG. Basic and acidic residues predominate over residues 2628–2671; sequence ELCHRREARAFSEGEQEKCGSETHHTRRNSRWDKRTLEQEDSSS. A necessary for nuclear localization region spans residues 2661–2677; sequence KRTLEQEDSSSKKRKLL.

It belongs to the DNA2/NAM7 helicase family. Homodimer. Interacts with PER2; the interaction inhibits termination of circadian target genes. Interacts with CHD4, POLR2A, PRKDC and TRIM28. Interacts with UBE2I. Interacts (via N-terminus domain) with EXOSC9 (via C-terminus region); the interaction enhances SETX sumoylation. Interacts with NCL (via N-terminus domain). Interacts with PABPN1, PABPC1 and SF3B1. Interacts with SMN1/SMN2 and POLR2A; SMN1/SMN2 recruits SETX to POLR2A. Ubiquitinated. In terms of processing, sumoylated preferentially with SUMO2 or SUMO3. Highly expressed in skeletal muscle. Expressed in heart, fibroblast, placenta and liver. Weakly expressed in brain and lung. Expressed in the cortex of the kidney (highly expressed in tubular epithelial cells but low expression in the glomerulus).

The protein resides in the nucleus. The protein localises to the nucleoplasm. It localises to the nucleolus. Its subcellular location is the cytoplasm. It is found in the chromosome. The protein resides in the telomere. The protein localises to the cell projection. It localises to the axon. Its subcellular location is the growth cone. Functionally, probable RNA/DNA helicase involved in diverse aspects of RNA metabolism and genomic integrity. Plays a role in transcription regulation by its ability to modulate RNA Polymerase II (Pol II) binding to chromatin and through its interaction with proteins involved in transcription. Contributes to the mRNA splicing efficiency and splice site selection. Required for the resolution of R-loop RNA-DNA hybrid formation at G-rich pause sites located downstream of the poly(A) site, allowing XRN2 recruitment and XRN2-mediated degradation of the downstream cleaved RNA and hence efficient RNA polymerase II (RNAp II) transcription termination. Required for the 3' transcriptional termination of PER1 and CRY2, thus playing an important role in the circadian rhythm regulation. Involved in DNA double-strand breaks damage response generated by oxidative stress. In association with RRP45, targets the RNA exosome complex to sites of transcription-induced DNA damage. Plays a role in the development and maturation of germ cells: essential for male meiosis, acting at the interface of transcription and meiotic recombination, and in the process of gene silencing during meiotic sex chromosome inactivation (MSCI). May be involved in telomeric stability through the regulation of telomere repeat-containing RNA (TERRA) transcription. Plays a role in neurite outgrowth in hippocampal cells through FGF8-activated signaling pathways. Inhibits retinoic acid-induced apoptosis. The protein is Probable helicase senataxin of Homo sapiens (Human).